The sequence spans 293 residues: MAKEILVAYGVDIDAVAGWLGSYGGEDSPDDISRGLFAGEVGIPRLLKLFKKYHLPATWFSPGHSIETFSEQMKMIVDAGHEVGAHGYSHENPIAMTAKQEEDVLLKSVELIKDLTGKAPTGYVAPWWEFSNITNELLLKHGFKYDHSLMHNDFTPYYVRVGDSWSKIDYSLEAKDWMKPLIRGVETDLVEIPANWYLDDLPPMMFIKKSPNSFGFVSPHDIGQMWIDQFDWVYREMDYAVFSMTIHPDVSARPQVLLMHEKIIEHINKHEGVRWVTFNEIADDFLKRNPRKK.

Positions 14, 86, and 90 each coordinate Zn(2+). The region spanning 29-276 is the NodB homology domain; it reads PDDISRGLFA…INKHEGVRWV (248 aa).

The protein belongs to the polysaccharide deacetylase family. As to quaternary structure, homotetramer.

The enzyme catalyses Deacetylation of xylans and xylo-oligosaccharides.. Functionally, catalyzes the N-deacetylation of peptidoglycan (PG), an important mechanism that appears to confer lysozyme resistance and to mitigate host immune detection; this likely contributes to pathogen persistence in the host. The exact nature of the residue in PG that is deacetylated has not been determined. Is also able to catalyze the deacetylation of acetylated xylan, and, to a lesser extent, that of chitin and chitosan. Therefore, this enzyme might play a role during infection, considering that xylan-containing carbohydrate structures are among those commonly consumed by humans. This Helicobacter pylori (strain ATCC 700392 / 26695) (Campylobacter pylori) protein is Peptidoglycan deacetylase (pgdA).